The chain runs to 122 residues: Large ribosomal subunit protein uL14c (122 aa).

It belongs to the universal ribosomal protein uL14 family. As to quaternary structure, part of the 50S ribosomal subunit.

The protein localises to the plastid. It localises to the chloroplast. Functionally, binds to 23S rRNA. The protein is Large ribosomal subunit protein uL14c of Arabis hirsuta (Hairy rock-cress).